A 284-amino-acid polypeptide reads, in one-letter code: Diaminopimelate epimerase (284 aa).

Residues Asn-13 and Asn-66 each contribute to the substrate site. The active-site Proton donor is the Cys-75. Residues 76–77 (GN), Asn-166, Asn-199, and 217–218 (ER) each bind substrate. The active-site Proton acceptor is Cys-226. 227–228 (GT) contributes to the substrate binding site.

This sequence belongs to the diaminopimelate epimerase family. Homodimer.

The protein resides in the cytoplasm. It carries out the reaction (2S,6S)-2,6-diaminopimelate = meso-2,6-diaminopimelate. The protein operates within amino-acid biosynthesis; L-lysine biosynthesis via DAP pathway; DL-2,6-diaminopimelate from LL-2,6-diaminopimelate: step 1/1. In terms of biological role, catalyzes the stereoinversion of LL-2,6-diaminopimelate (L,L-DAP) to meso-diaminopimelate (meso-DAP), a precursor of L-lysine and an essential component of the bacterial peptidoglycan. The protein is Diaminopimelate epimerase of Halothermothrix orenii (strain H 168 / OCM 544 / DSM 9562).